The chain runs to 166 residues: Interferon gamma (166 aa).

The first 23 residues, 1-23 (MKYTSYFLALQLCLLLGFSGSYG), serve as a signal peptide directing secretion. Pyrrolidone carboxylic acid is present on Gln24. N-linked (GlcNAc...) asparagine glycosylation is found at Asn39 and Asn106.

Belongs to the type II (or gamma) interferon family. Homodimer. Interacts with IFNGR1 (via extracellular domain); this interaction promotes IFNGR1 dimerization. In terms of tissue distribution, released primarily from activated T lymphocytes.

The protein resides in the secreted. In terms of biological role, type II interferon produced by immune cells such as T-cells and NK cells that plays crucial roles in antimicrobial, antiviral, and antitumor responses by activating effector immune cells and enhancing antigen presentation. Primarily signals through the JAK-STAT pathway after interaction with its receptor IFNGR1 to affect gene regulation. Upon IFNG binding, IFNGR1 intracellular domain opens out to allow association of downstream signaling components JAK2, JAK1 and STAT1, leading to STAT1 activation, nuclear translocation and transcription of IFNG-regulated genes. Many of the induced genes are transcription factors such as IRF1 that are able to further drive regulation of a next wave of transcription. Plays a role in class I antigen presentation pathway by inducing a replacement of catalytic proteasome subunits with immunoproteasome subunits. In turn, increases the quantity, quality, and repertoire of peptides for class I MHC loading. Increases the efficiency of peptide generation also by inducing the expression of activator PA28 that associates with the proteasome and alters its proteolytic cleavage preference. Up-regulates as well MHC II complexes on the cell surface by promoting expression of several key molecules such as cathepsins B/CTSB, H/CTSH, and L/CTSL. Participates in the regulation of hematopoietic stem cells during development and under homeostatic conditions by affecting their development, quiescence, and differentiation. This chain is Interferon gamma (IFNG), found in Moschus berezovskii (Chinese forest musk deer).